The primary structure comprises 548 residues: Probable malate:quinone oxidoreductase (548 aa).

The tract at residues 521-548 (DKPQAADSTPKPQLKPQPVQKEVADIAL) is disordered. The segment covering 530–541 (PKPQLKPQPVQK) has biased composition (low complexity).

Belongs to the MQO family. FAD serves as cofactor.

It carries out the reaction (S)-malate + a quinone = a quinol + oxaloacetate. The protein operates within carbohydrate metabolism; tricarboxylic acid cycle; oxaloacetate from (S)-malate (quinone route): step 1/1. In Escherichia coli O139:H28 (strain E24377A / ETEC), this protein is Probable malate:quinone oxidoreductase.